We begin with the raw amino-acid sequence, 1423 residues long: Fructan beta-fructosidase (1423 aa).

Residues 1–39 (MEEETVCKNWFMRKSGKSWIFGCAVFFVLGLATALPVAA) form the signal peptide. The segment at 44–161 (QTTAADTAVT…TNLEDMSHDT (118 aa)) is disordered. Positions 69–126 (AVTETTQSEGTASKQLTTPAVADQTTEPTDNEPISSSDGASSPYQVTDTTEPQQTLTP) are enriched in polar residues. Residues 455-458 (WAND), Q474, 513-514 (FS), 581-582 (RD), and D783 each bind substrate. The active site involves D458. The segment at 867-871 (ASVEV) is involved in binding of sugars with beta-(2,6) linkages or binding of molecular weight fructans. The BIG2 domain maps to 924-1002 (PVAMNTTTAK…SKENPSLSKT (79 aa)). A compositionally biased stretch (polar residues) spans 1368–1385 (DVNSVQQTEPSVMSSSPK). The tract at residues 1368–1394 (DVNSVQQTEPSVMSSSPKATLPDTGDH) is disordered. The LPXTG sorting signal motif lies at 1388 to 1392 (LPDTG). Residue T1391 is modified to Pentaglycyl murein peptidoglycan amidated threonine. The propeptide at 1392–1423 (GDHKTDLSQLGVLAMIGSFLVEIAGYFKKRKD) is removed by sortase.

This sequence belongs to the glycosyl hydrolase 32 family.

It is found in the secreted. Its subcellular location is the cell wall. It catalyses the reaction Hydrolysis of terminal, non-reducing (2-&gt;1)- and (2-&gt;6)-linked beta-D-fructofuranose residues in fructans.. This protein is a fructanase enzyme which degrades levans and inulins to fructose and also cleaves sucrose into glucose and fructose and can therefore function as an extracellular invertase. The protein is Fructan beta-fructosidase (fruA) of Streptococcus mutans serotype c (strain ATCC 700610 / UA159).